A 151-amino-acid chain; its full sequence is Regulatory protein RecX (151 aa).

The protein belongs to the RecX family.

Its subcellular location is the cytoplasm. Modulates RecA activity. This is Regulatory protein RecX from Herminiimonas arsenicoxydans.